The primary structure comprises 705 residues: Lethal(3)malignant brain tumor-like protein 2 (705 aa).

A disordered region spans residues 1–84 (MEKPRSIEET…GTPRSLDGSG (84 aa)). Ser13 carries the phosphoserine modification. Positions 15-25 (PMEEEEDDDLE) are enriched in acidic residues. Residues 38–49 (SSVGSESSSYLE) are compositionally biased toward low complexity. The segment covering 50-60 (ESSEAENEDRE) has biased composition (acidic residues). Ser67 is subject to Phosphoserine. Thr76 is subject to Phosphothreonine. An FCS-type zinc finger spans residues 81 to 116 (DGSGSEPAVCEMCGIVGTREAFFSKTKRFCSVSCSR). 4 residues coordinate Zn(2+): Cys90, Cys93, Cys110, and Cys114. MBT repeat units lie at residues 179-283 (FDWG…LVPP), 291-391 (TDWK…IKMS), 397-500 (MAHH…LTPP), and 508-604 (FNWE…LQPP). Ser338 is modified (phosphoserine). Lys405 participates in a covalent cross-link: Glycyl lysine isopeptide (Lys-Gly) (interchain with G-Cter in SUMO2). The disordered stretch occupies residues 608-665 (EPATPLKAKEATKKKKKQFGKKRKRIPPTKTRPLRQGSKKPLLEDDPQGARKISSEPV). Basic residues predominate over residues 619-634 (TKKKKKQFGKKRKRIP). Glycyl lysine isopeptide (Lys-Gly) (interchain with G-Cter in SUMO2) cross-links involve residues Lys647, Lys659, and Lys675. Residues 680 to 705 (DVASPDKASSPELPVSVENIKQETDD) are disordered. Residues Ser683, Ser688, and Ser689 each carry the phosphoserine modification. A Glycyl lysine isopeptide (Lys-Gly) (interchain with G-Cter in SUMO1); alternate cross-link involves residue Lys700. Residue Lys700 forms a Glycyl lysine isopeptide (Lys-Gly) (interchain with G-Cter in SUMO2); alternate linkage.

As to quaternary structure, part of the E2F6.com-1 complex in G0 phase composed of E2F6, MGA, MAX, TFDP1, CBX3, BAT8, EUHMTASE1, RING1, RNF2, MBLR, BAT8 and YAF2.

The protein resides in the nucleus. Its function is as follows. Putative Polycomb group (PcG) protein. PcG proteins maintain the transcriptionally repressive state of genes, probably via a modification of chromatin, rendering it heritably changed in its expressibility. Its association with a chromatin-remodeling complex suggests that it may contribute to prevent expression of genes that trigger the cell into mitosis. Binds to monomethylated and dimethylated 'Lys-20' on histone H4. Binds histone H3 peptides that are monomethylated or dimethylated on 'Lys-4', 'Lys-9' or 'Lys-27'. This chain is Lethal(3)malignant brain tumor-like protein 2 (L3MBTL2), found in Homo sapiens (Human).